We begin with the raw amino-acid sequence, 434 residues long: Putative neutral sphingomyelinase (434 aa).

Glu-83 contacts Mg(2+). His-318 functions as the Proton acceptor in the catalytic mechanism. 2 consecutive transmembrane segments (helical) span residues 366–388 and 392–414; these read IFFF…FEVF and FAVL…LIGL.

Belongs to the neutral sphingomyelinase family.

It is found in the membrane. It catalyses the reaction an N-(acyl)-sphingosylphosphocholine + H2O = an N-acyl-sphingoid base + phosphocholine + H(+). The catalysed reaction is a sphingomyelin + H2O = phosphocholine + an N-acylsphing-4-enine + H(+). It carries out the reaction an N-acyl-15-methylhexadecasphing-4-enine-1-phosphocholine + H2O = an N-acyl-15-methylhexadecasphing-4-enine + phosphocholine + H(+). The protein operates within lipid metabolism; sphingolipid metabolism. In terms of biological role, catalyzes the hydrolysis of sphingomyelin producing a ceramide (N-acyl-sphingoid base) and a phosphocholine. C.elegans contain specific sphingoid bases, which are unique or different in structure compared to the sphingoid bases found in other animals. Two examples of these distinctive compounds are: 15-methylhexadecasphinganine and 15-methylhexadecasphing-4-enine. In Caenorhabditis elegans, this protein is Putative neutral sphingomyelinase.